The primary structure comprises 190 residues: Lipid A acyltransferase PagP (190 aa).

The N-terminal stretch at 1-24 is a signal peptide; the sequence is MNRYLLTTLSAPLLALFFSFSLQA. Residues His62, Asp105, and Ser106 contribute to the active site.

The protein belongs to the lipid A palmitoyltransferase family. As to quaternary structure, homodimer.

The protein resides in the cell outer membrane. It catalyses the reaction a lipid A + a 1,2-diacyl-sn-glycero-3-phosphocholine = a hepta-acyl lipid A + a 2-acyl-sn-glycero-3-phosphocholine. It carries out the reaction a lipid IVA + a 1,2-diacyl-sn-glycero-3-phosphocholine = a lipid IVB + a 2-acyl-sn-glycero-3-phosphocholine. The enzyme catalyses a lipid IIA + a 1,2-diacyl-sn-glycero-3-phosphocholine = a lipid IIB + a 2-acyl-sn-glycero-3-phosphocholine. Transfers a fatty acid residue from the sn-1 position of a phospholipid to the N-linked hydroxyfatty acid chain on the proximal unit of lipid A or its precursors. This is Lipid A acyltransferase PagP from Pantoea ananatis (strain LMG 20103).